A 128-amino-acid polypeptide reads, in one-letter code: Large-conductance mechanosensitive channel (128 aa).

2 consecutive transmembrane segments (helical) span residues Phe11–Gly31 and Gly70–Val90.

It belongs to the MscL family. Homopentamer.

Its subcellular location is the cell membrane. Functionally, channel that opens in response to stretch forces in the membrane lipid bilayer. May participate in the regulation of osmotic pressure changes within the cell. The chain is Large-conductance mechanosensitive channel from Listeria monocytogenes serotype 4b (strain CLIP80459).